Consider the following 609-residue polypeptide: UvrABC system protein C (609 aa).

The GIY-YIG domain maps to 16-94; it reads SSAGVYRMYD…IKQYMPKYNV (79 aa). In terms of domain architecture, UVR spans 203 to 238; sequence KQVISELVAKMEEAAEQQAYEQAARFRDQIMALRRV.

It belongs to the UvrC family. In terms of assembly, interacts with UvrB in an incision complex.

It localises to the cytoplasm. Functionally, the UvrABC repair system catalyzes the recognition and processing of DNA lesions. UvrC both incises the 5' and 3' sides of the lesion. The N-terminal half is responsible for the 3' incision and the C-terminal half is responsible for the 5' incision. The sequence is that of UvrABC system protein C from Shewanella sp. (strain MR-4).